We begin with the raw amino-acid sequence, 668 residues long: Fe(2+) transporter FeoB (668 aa).

A FeoB-type G domain is found at 3-165 (SYEIALIGNP…KKAISIAVKD (163 aa)). Position 10–17 (10–17 (GNPNVGKS)) interacts with GTP. Mg(2+)-binding residues include Asn21, Ala22, Thr24, and Gly25. GTP-binding positions include 35–39 (GVTVE), 56–59 (DLPG), 116–119 (NKMD), and 145–147 (SAA). The next 8 membrane-spanning stretches (helical) occupy residues 344–364 (VGAV…ISFL), 386–406 (LPGK…PAIM), 418–438 (ILTI…IYAL), 450–470 (VVIL…AFLF), 515–535 (IIVF…SGYL), 574–594 (ALVF…MLYG), 613–633 (AYAF…LAVI), and 643–663 (LFAV…ISVI).

The protein belongs to the TRAFAC class TrmE-Era-EngA-EngB-Septin-like GTPase superfamily. FeoB GTPase (TC 9.A.8) family. In terms of assembly, the crystallized N-terminal domain is a homodimer.

Its subcellular location is the cell membrane. Its function is as follows. Probable transporter of a GTP-driven Fe(2+) uptake system, might be able to transport Fe(2+) into or out of the cell. In Methanocaldococcus jannaschii (strain ATCC 43067 / DSM 2661 / JAL-1 / JCM 10045 / NBRC 100440) (Methanococcus jannaschii), this protein is Fe(2+) transporter FeoB.